A 241-amino-acid chain; its full sequence is Small ribosomal subunit protein uS2 (241 aa).

The protein belongs to the universal ribosomal protein uS2 family.

The chain is Small ribosomal subunit protein uS2 from Klebsiella pneumoniae (strain 342).